The sequence spans 81 residues: Putative membrane protein insertion efficiency factor (81 aa).

It belongs to the UPF0161 family.

The protein resides in the cell inner membrane. Functionally, could be involved in insertion of integral membrane proteins into the membrane. In Thermotoga maritima (strain ATCC 43589 / DSM 3109 / JCM 10099 / NBRC 100826 / MSB8), this protein is Putative membrane protein insertion efficiency factor.